A 246-amino-acid polypeptide reads, in one-letter code: DNA repair protein RecO (246 aa).

It belongs to the RecO family.

Involved in DNA repair and RecF pathway recombination. The sequence is that of DNA repair protein RecO from Proteus mirabilis (strain HI4320).